The sequence spans 288 residues: Diaminopimelate epimerase (288 aa).

Residues Asn-14 and Asn-67 each coordinate substrate. The active-site Proton donor is Cys-76. Residues 77-78 (GN), Asn-166, Asn-199, and 217-218 (ER) contribute to the substrate site. The active-site Proton acceptor is Cys-226. Residue 227–228 (GT) participates in substrate binding.

Belongs to the diaminopimelate epimerase family. As to quaternary structure, homodimer.

Its subcellular location is the cytoplasm. The catalysed reaction is (2S,6S)-2,6-diaminopimelate = meso-2,6-diaminopimelate. It functions in the pathway amino-acid biosynthesis; L-lysine biosynthesis via DAP pathway; DL-2,6-diaminopimelate from LL-2,6-diaminopimelate: step 1/1. Functionally, catalyzes the stereoinversion of LL-2,6-diaminopimelate (L,L-DAP) to meso-diaminopimelate (meso-DAP), a precursor of L-lysine and an essential component of the bacterial peptidoglycan. The protein is Diaminopimelate epimerase of Bacillus cereus (strain B4264).